Consider the following 460-residue polypeptide: Argininosuccinate lyase (460 aa).

The protein belongs to the lyase 1 family. Argininosuccinate lyase subfamily.

It is found in the cytoplasm. The enzyme catalyses 2-(N(omega)-L-arginino)succinate = fumarate + L-arginine. It functions in the pathway amino-acid biosynthesis; L-arginine biosynthesis; L-arginine from L-ornithine and carbamoyl phosphate: step 3/3. The polypeptide is Argininosuccinate lyase (Buchnera aphidicola subsp. Cinara cedri (strain Cc)).